A 365-amino-acid polypeptide reads, in one-letter code: Outer membrane protein assembly factor BamC (365 aa).

A signal peptide spans 1–19 (MKHNRLAIAALAPVLILVG). Cys-20 is lipidated: N-palmitoyl cysteine. A lipid anchor (S-diacylglycerol cysteine) is attached at Cys-20.

It belongs to the BamC family. Part of the Bam complex.

It is found in the cell outer membrane. In terms of biological role, part of the outer membrane protein assembly complex, which is involved in assembly and insertion of beta-barrel proteins into the outer membrane. This Ferrimonas balearica (strain DSM 9799 / CCM 4581 / KCTC 23876 / PAT) protein is Outer membrane protein assembly factor BamC.